Here is a 392-residue protein sequence, read N- to C-terminus: MTAASLDPTAFSLDAASLAARLDAVFDQALRERRLVGAVAIVARHGEILYRRAQGLADREAGRPMREDTLFRLASVTKPIVALAVLRLVARGELALDAPVTRWLPEFRPRLADGSEPLVTIHHLLTHTSGLGYWLLEGAGSVYDRLGISDGIDLRDFDLDENLRRLASAPLSFAPGSGWQYSLALDVLGAVVERATGQPLAAAVDALVAQPLGMRDCGFVSAEPERFAVPYHDGQPEPVRMRDGIEVPLPEGHGAAVRFAPSRVFEPGAYPSGGAGMYGSADDVLRALEAIRANPGFLPETLADAARRDQAGVGAETRGPGWGFGYLSAVLDDPAAAGTPQHAGTLQWGGVYGHSWFVDRALGLSVLLLTNTAYEGMSGPLTIALRDAVYAR.

Residue S75 is the Acyl-ester intermediate of the active site.

This sequence belongs to the class-A beta-lactamase family.

The protein resides in the cytoplasm. Strongly inhibited by eserin, NaF, HgCl2, SDS and Triton X-100. Its function is as follows. Acts on short-chain (C4-C6) fatty acid esters and triglycerides, including tertiary alcohol esters. Activity on p-nitrophenyl esters is generally higher than on o-nitrophenyl esters. Lacks beta-lactamase activity; it hydrolyzes the ester bond of cephalosporin substrates but there is no opening of the beta-lactam ring observed. The chain is Esterase EstB (estB) from Burkholderia gladioli (Pseudomonas marginata).